The sequence spans 728 residues: MLYQSETIQVSWLKDGIAELVFNAPAAINKLDTKTVASLDKAIASLEQQTGLKGVLLRSEKTAFIVGADITEFLSLFDSPVEKLQEWLNFSNSIFNRIEDLPVPTISAINGYALGGGCECVLSTDFRVASPDIRIGLPETKLGIMPGFGGSVRLPRLIGTDNALDIIAAGKDIGAEEALKNGLIDAVVPKEKLVDSAVSMLEQAIAGNLDWKAARQPKLEPLKLNETERGMSFSVAKGMVMKVAGPHYPAPITAVKSIEKAATFGRDEALKQETASFIPLAQTNVARALVGIFLNDQYVKGLAKKHLKEVTIPEYAAVLGAGIMGGGIAYQSARKGIPVMMKDISQQSLELGMNEAAKLLNKQFERGRLDAIKMARTLSSIQPTLNYAGIEQAQIVVEAVVENPKIKAAVLSETETLVNEDCVLASNTSTIPISELAKSLKRPENFCGMHFFNPVHRMPLVEVIRGEKTSEKTISTVVAYASKMGKTPIVVNDCPGFFVNRVLLPYLLGFGLLLRDGGDFRQIDKIMEKEFGWPMGPAYLIDVIGLDTAHHSQSVMAQGFPDRMHRDYKDAIHVLYDNQRYGQKNGLGFYKYTQDKKGKPKKEQDEQTDQLLATICQQKSNFSGEEIIARTMIPMINEVVRCLEEGVIASPAEADMALVYGLGFPPFHGGVFRYLETMGTAAYVKMAENYAHLGALYQVPPGLKAKAERNESYYSTAATIAVSTGKTA.

The tract at residues 1–189 is enoyl-CoA hydratase/isomerase; sequence MLYQSETIQV…KNGLIDAVVP (189 aa). Asp-296 is a binding site for substrate. Positions 311-728 are 3-hydroxyacyl-CoA dehydrogenase; the sequence is TIPEYAAVLG…TIAVSTGKTA (418 aa). NAD(+) is bound by residues Met-324, Asp-343, 400-402, Lys-407, and Ser-429; that span reads VVE. His-450 (for 3-hydroxyacyl-CoA dehydrogenase activity) is an active-site residue. NAD(+) is bound at residue Asn-453. Substrate is bound by residues Asn-500 and Tyr-660.

The protein in the N-terminal section; belongs to the enoyl-CoA hydratase/isomerase family. It in the C-terminal section; belongs to the 3-hydroxyacyl-CoA dehydrogenase family. In terms of assembly, heterotetramer of two alpha chains (FadB) and two beta chains (FadA).

It carries out the reaction a (3S)-3-hydroxyacyl-CoA + NAD(+) = a 3-oxoacyl-CoA + NADH + H(+). The catalysed reaction is a (3S)-3-hydroxyacyl-CoA = a (2E)-enoyl-CoA + H2O. The enzyme catalyses a 4-saturated-(3S)-3-hydroxyacyl-CoA = a (3E)-enoyl-CoA + H2O. It catalyses the reaction (3S)-3-hydroxybutanoyl-CoA = (3R)-3-hydroxybutanoyl-CoA. It carries out the reaction a (3Z)-enoyl-CoA = a 4-saturated (2E)-enoyl-CoA. The catalysed reaction is a (3E)-enoyl-CoA = a 4-saturated (2E)-enoyl-CoA. The protein operates within lipid metabolism; fatty acid beta-oxidation. Its function is as follows. Involved in the aerobic and anaerobic degradation of long-chain fatty acids via beta-oxidation cycle. Catalyzes the formation of 3-oxoacyl-CoA from enoyl-CoA via L-3-hydroxyacyl-CoA. It can also use D-3-hydroxyacyl-CoA and cis-3-enoyl-CoA as substrate. This Photorhabdus laumondii subsp. laumondii (strain DSM 15139 / CIP 105565 / TT01) (Photorhabdus luminescens subsp. laumondii) protein is Fatty acid oxidation complex subunit alpha.